We begin with the raw amino-acid sequence, 464 residues long: tRNA modification GTPase MnmE (464 aa).

Residues R25, E87, and K130 each coordinate (6S)-5-formyl-5,6,7,8-tetrahydrofolate. Residues 226–386 form the TrmE-type G domain; it reads GLSVVLAGQP…LRAELLRIAG (161 aa). N236 provides a ligand contact to K(+). GTP is bound by residues 236–241, 255–261, and 280–283; these read NVGKSS, TPIAGTT, and DTAG. S240 is a binding site for Mg(2+). Residues T255, I257, and T260 each coordinate K(+). T261 contacts Mg(2+). K464 is a (6S)-5-formyl-5,6,7,8-tetrahydrofolate binding site.

Belongs to the TRAFAC class TrmE-Era-EngA-EngB-Septin-like GTPase superfamily. TrmE GTPase family. Homodimer. Heterotetramer of two MnmE and two MnmG subunits. It depends on K(+) as a cofactor.

It localises to the cytoplasm. In terms of biological role, exhibits a very high intrinsic GTPase hydrolysis rate. Involved in the addition of a carboxymethylaminomethyl (cmnm) group at the wobble position (U34) of certain tRNAs, forming tRNA-cmnm(5)s(2)U34. The protein is tRNA modification GTPase MnmE of Burkholderia ambifaria (strain ATCC BAA-244 / DSM 16087 / CCUG 44356 / LMG 19182 / AMMD) (Burkholderia cepacia (strain AMMD)).